Reading from the N-terminus, the 225-residue chain is NAD(P)H-quinone oxidoreductase subunit K, chloroplastic (225 aa).

[4Fe-4S] cluster contacts are provided by C43, C44, C108, and C139.

The protein belongs to the complex I 20 kDa subunit family. NDH is composed of at least 16 different subunits, 5 of which are encoded in the nucleus. It depends on [4Fe-4S] cluster as a cofactor.

It localises to the plastid. The protein localises to the chloroplast thylakoid membrane. The catalysed reaction is a plastoquinone + NADH + (n+1) H(+)(in) = a plastoquinol + NAD(+) + n H(+)(out). The enzyme catalyses a plastoquinone + NADPH + (n+1) H(+)(in) = a plastoquinol + NADP(+) + n H(+)(out). In terms of biological role, NDH shuttles electrons from NAD(P)H:plastoquinone, via FMN and iron-sulfur (Fe-S) centers, to quinones in the photosynthetic chain and possibly in a chloroplast respiratory chain. The immediate electron acceptor for the enzyme in this species is believed to be plastoquinone. Couples the redox reaction to proton translocation, and thus conserves the redox energy in a proton gradient. This Crucihimalaya wallichii (Rock-cress) protein is NAD(P)H-quinone oxidoreductase subunit K, chloroplastic.